The chain runs to 382 residues: MSTYTRPVMLLLSGLLLLTLAIAVLNTLVPLWLAQEHMSTWQVGVVSSSYFTGNLVGTLLTGYVIKRIGFNRSYYLASFIFAAGCAGLGLMIGFWSWLAWRFVAGVGCAMIWVVVESALMCSGTSRNRGRLLAAYMMVYYVGTFLGQLLVSKVSTELMSVLPWVTGLTLAGILPLLFTRVLNQQAENHDSTSITAMLKLRQARLGVNGCIISGIVLGSLYGLMPLYLNHKGVSNASIGFWMAVLVSAGILGQWPIGRLADKFGRLLVLRVQVFVVILGSIAMLSQAAMAPALFILGAAGFTLYPVAMAWACEKVEHHQLVAMNQALLLSYTVGSLLGPSFTAMLMQNFSDNLLFIMIASVSFIYLLMLLRNAGHTPKPVAHV.

The next 12 membrane-spanning stretches (helical) occupy residues 14 to 34 (GLLL…LWLA), 45 to 65 (VVSS…GYVI), 79 to 99 (FIFA…SWLA), 102 to 122 (FVAG…LMCS), 131 to 151 (LLAA…LLVS), 157 to 177 (LMSV…PLLF), 204 to 224 (LGVN…GLMP), 235 to 255 (ASIG…QWPI), 270 to 290 (VQVF…AMAP), 291 to 311 (ALFI…AWAC), 325 to 345 (ALLL…AMLM), and 348 to 368 (FSDN…LLML).

It belongs to the major facilitator superfamily. YcaD (TC 2.A.1.26) family.

Its subcellular location is the cell inner membrane. This is an uncharacterized protein from Shigella sonnei (strain Ss046).